Reading from the N-terminus, the 550-residue chain is Phospholipase B-like 1 (550 aa).

Positions Met-1 to Ala-39 are cleaved as a signal peptide. Asn-72 carries an N-linked (GlcNAc...) (high mannose) asparagine; alternate glycan. N-linked (GlcNAc...) (hybrid) asparagine; alternate glycosylation occurs at Asn-72. Positions Leu-210 to His-228 are cleaved as a propeptide — removed in mature form. Asn-309 and Asn-412 each carry an N-linked (GlcNAc...) (high mannose) asparagine; alternate glycan. N-linked (GlcNAc...) (hybrid) asparagine; alternate glycosylation is found at Asn-309 and Asn-412. 2 cysteine pairs are disulfide-bonded: Cys-471–Cys-476 and Cys-475–Cys-490. Asn-527 carries an N-linked (GlcNAc...) (high mannose) asparagine; alternate glycan. A glycan (N-linked (GlcNAc...) (hybrid) asparagine; alternate) is linked at Asn-527.

It belongs to the phospholipase B-like family. May form a homodimer, each monomer is composed of a chain A and a chain B. Post-translationally, the maturation cleavages that produces chains A and B are required to open the putative substrate binding pocket. Both chains A and B remain associated in the mature protein.

The protein localises to the lysosome. In terms of biological role, exhibits weak phospholipase activity, acting on various phospholipids, including phosphatidylcholine, phosphatidylinositol, phosphatidylethanolamine and lysophospholipids. However, in view of the small size of the putative binding pocket, it has been proposed that it may act rather as an amidase or a peptidase. The sequence is that of Phospholipase B-like 1 (Plbd1) from Rattus norvegicus (Rat).